The following is a 515-amino-acid chain: Histidine ammonia-lyase (515 aa).

The 5-imidazolinone (Ala-Gly) cross-link spans 142 to 144 (ASG). At S143 the chain carries 2,3-didehydroalanine (Ser).

This sequence belongs to the PAL/histidase family. Contains an active site 4-methylidene-imidazol-5-one (MIO), which is formed autocatalytically by cyclization and dehydration of residues Ala-Ser-Gly.

The protein resides in the cytoplasm. It carries out the reaction L-histidine = trans-urocanate + NH4(+). The protein operates within amino-acid degradation; L-histidine degradation into L-glutamate; N-formimidoyl-L-glutamate from L-histidine: step 1/3. In Bradyrhizobium sp. (strain BTAi1 / ATCC BAA-1182), this protein is Histidine ammonia-lyase.